The following is a 194-amino-acid chain: Histone H1.0-A (194 aa).

Disordered stretches follow at residues 1-29 (MTEN…YSDM) and 96-194 (ADEV…GRKK). The region spanning 22–95 (DHPKYSDMIL…GASGSFRLAK (74 aa)) is the H15 domain. Composition is skewed to basic residues over residues 102-164 (PAKK…KTVR) and 172-194 (KAKK…GRKK).

This sequence belongs to the histone H1/H5 family.

The protein resides in the nucleus. The protein localises to the chromosome. In terms of biological role, histones H1 are necessary for the condensation of nucleosome chains into higher-order structures. The histones H1.0 are found in cells that are in terminal stages of differentiation or that have low rates of cell division. This Xenopus laevis (African clawed frog) protein is Histone H1.0-A (h1-0-a).